A 475-amino-acid chain; its full sequence is Bifunctional protein HldE (475 aa).

The tract at residues 1 to 318 (MMQYSPKFNN…ENAIHHREET (318 aa)) is ribokinase. 195 to 198 (NMSE) contacts ATP. Residue Asp-264 is part of the active site. The segment at 344 to 475 (MTNGCFDILH…NVIKKIQASK (132 aa)) is cytidylyltransferase.

It in the N-terminal section; belongs to the carbohydrate kinase PfkB family. In the C-terminal section; belongs to the cytidylyltransferase family. As to quaternary structure, homodimer.

It catalyses the reaction D-glycero-beta-D-manno-heptose 7-phosphate + ATP = D-glycero-beta-D-manno-heptose 1,7-bisphosphate + ADP + H(+). It carries out the reaction D-glycero-beta-D-manno-heptose 1-phosphate + ATP + H(+) = ADP-D-glycero-beta-D-manno-heptose + diphosphate. Its pathway is nucleotide-sugar biosynthesis; ADP-L-glycero-beta-D-manno-heptose biosynthesis; ADP-L-glycero-beta-D-manno-heptose from D-glycero-beta-D-manno-heptose 7-phosphate: step 1/4. The protein operates within nucleotide-sugar biosynthesis; ADP-L-glycero-beta-D-manno-heptose biosynthesis; ADP-L-glycero-beta-D-manno-heptose from D-glycero-beta-D-manno-heptose 7-phosphate: step 3/4. Catalyzes the phosphorylation of D-glycero-D-manno-heptose 7-phosphate at the C-1 position to selectively form D-glycero-beta-D-manno-heptose-1,7-bisphosphate. Its function is as follows. Catalyzes the ADP transfer from ATP to D-glycero-beta-D-manno-heptose 1-phosphate, yielding ADP-D-glycero-beta-D-manno-heptose. The protein is Bifunctional protein HldE of Actinobacillus pleuropneumoniae serotype 5b (strain L20).